The chain runs to 342 residues: Isopentenyl-diphosphate delta-isomerase (342 aa).

Residue 11–12 (RK) participates in substrate binding. Residues Ser68, 69–71 (SMT), Ser99, and Asn127 each bind FMN. 99 to 101 (SMR) is a substrate binding site. Residue Glu163 coordinates Mg(2+). Residues Lys194, Thr224, and 295–296 (AG) each bind FMN.

Belongs to the IPP isomerase type 2 family. In terms of assembly, homooctamer. Dimer of tetramers. FMN is required as a cofactor. Requires NADPH as cofactor. Mg(2+) serves as cofactor.

Its subcellular location is the cytoplasm. It catalyses the reaction isopentenyl diphosphate = dimethylallyl diphosphate. Involved in the biosynthesis of isoprenoids. Catalyzes the 1,3-allylic rearrangement of the homoallylic substrate isopentenyl (IPP) to its allylic isomer, dimethylallyl diphosphate (DMAPP). The chain is Isopentenyl-diphosphate delta-isomerase from Rickettsia prowazekii (strain Madrid E).